A 186-amino-acid chain; its full sequence is MSAEFDLADIKRRMQGAIATLKHELGGLRTGRASASLIEPVNVEAYGQTMPLNQVATISVPEPRMLSVQVWDKGMVGAVDKAIRNANLGLSPTVEGQVLRIRIPELNEQRRKEMAKVAHKYAEDARVAIRHVRRDGIDVLKRLLKDKEISEDDEKRHESEVQKATDQCVADVDSALVAKEREIMQV.

Belongs to the RRF family.

The protein localises to the cytoplasm. Its function is as follows. Responsible for the release of ribosomes from messenger RNA at the termination of protein biosynthesis. May increase the efficiency of translation by recycling ribosomes from one round of translation to another. The chain is Ribosome-recycling factor from Methylocella silvestris (strain DSM 15510 / CIP 108128 / LMG 27833 / NCIMB 13906 / BL2).